The sequence spans 538 residues: Glutamyl-tRNA(Gln) amidotransferase subunit B, mitochondrial (538 aa).

It belongs to the GatB/GatE family. GatB subfamily. In terms of assembly, subunit of the heterotrimeric GatCAB amidotransferase (AdT) complex, composed of A, B and C subunits.

The protein localises to the mitochondrion. The enzyme catalyses L-glutamyl-tRNA(Gln) + L-glutamine + ATP + H2O = L-glutaminyl-tRNA(Gln) + L-glutamate + ADP + phosphate + H(+). Allows the formation of correctly charged Gln-tRNA(Gln) through the transamidation of misacylated Glu-tRNA(Gln) in the mitochondria. The reaction takes place in the presence of glutamine and ATP through an activated gamma-phospho-Glu-tRNA(Gln). In Dictyostelium discoideum (Social amoeba), this protein is Glutamyl-tRNA(Gln) amidotransferase subunit B, mitochondrial.